The primary structure comprises 622 residues: DNA mismatch repair protein MutL (622 aa).

Belongs to the DNA mismatch repair MutL/HexB family.

Its function is as follows. This protein is involved in the repair of mismatches in DNA. It is required for dam-dependent methyl-directed DNA mismatch repair. May act as a 'molecular matchmaker', a protein that promotes the formation of a stable complex between two or more DNA-binding proteins in an ATP-dependent manner without itself being part of a final effector complex. The sequence is that of DNA mismatch repair protein MutL from Clostridium acetobutylicum (strain ATCC 824 / DSM 792 / JCM 1419 / IAM 19013 / LMG 5710 / NBRC 13948 / NRRL B-527 / VKM B-1787 / 2291 / W).